The primary structure comprises 462 residues: Nuclear distribution protein PAC1 (462 aa).

The 33-residue stretch at 9–41 folds into the LisH domain; it reads QAEELHKAIIAYLGVINAPKTAAAFREEVNFSA. The stretch at 60 to 87 forms a coiled coil; it reads TSVVRLQKKVLELEQRNQSLQSELDSTT. The span at 78–99 shows a compositional bias: polar residues; the sequence is SLQSELDSTTPTSLLRRNQDPS. The interval 78–103 is disordered; sequence SLQSELDSTTPTSLLRRNQDPSSWLP. WD repeat units lie at residues 113–154, 156–196, 200–247, 250–289, 292–352, 354–393, 398–445, and 447–462; these read SHRS…RTVK, HTKG…KNIR, GHDH…CVKT, GHADWVRDVSPSFDGRWLLSAGNDQTARLWDASSGEAKCT, GHEH…IKTL, GHDNWVRALIFHPGGKYLLSASDDKTIRCWDLTQEGRCVK, AHSH…AGIR, and VIATGCVDLNVRIFAS. The interval 414–434 is disordered; sequence KDAPTNGDAPNGTTANGASKK.

Belongs to the WD repeat LIS1/nudF family. In terms of assembly, self-associates. Interacts with NDL1 and dynein.

It is found in the cytoplasm. The protein resides in the cytoskeleton. The protein localises to the spindle pole. In terms of biological role, positively regulates the activity of the minus-end directed microtubule motor protein dynein. May enhance dynein-mediated microtubule sliding by targeting dynein to the microtubule plus end. Required for nuclear migration during vegetative growth as well as development. Required for retrograde early endosome (EE) transport from the hyphal tip. Required for localization of dynein to the mitotic spindle poles. Recruits additional proteins to the dynein complex at SPBs. The protein is Nuclear distribution protein PAC1 of Phaeosphaeria nodorum (strain SN15 / ATCC MYA-4574 / FGSC 10173) (Glume blotch fungus).